The chain runs to 660 residues: Bifunctional polymyxin resistance protein ArnA (660 aa).

A formyltransferase ArnAFT region spans residues Met-1–Leu-304. Residue His-86–Ile-88 participates in (6R)-10-formyltetrahydrofolate binding. His-104 (proton donor; for formyltransferase activity) is an active-site residue. Residues Arg-114 and Val-136 to Asp-140 contribute to the (6R)-10-formyltetrahydrofolate site. The tract at residues Arg-314–Ser-660 is dehydrogenase ArnADH. Residues Asp-347 and Asp-368 to Ile-369 each bind NAD(+). Residues Ala-393, Tyr-398, and Thr-432–Ser-433 contribute to the UDP-alpha-D-glucuronate site. Glu-434 (proton acceptor; for decarboxylase activity) is an active-site residue. UDP-alpha-D-glucuronate-binding positions include Arg-460, Asn-492, Lys-526–Arg-535, and Tyr-613. Arg-619 acts as the Proton donor; for decarboxylase activity in catalysis.

The protein in the N-terminal section; belongs to the Fmt family. UDP-L-Ara4N formyltransferase subfamily. It in the C-terminal section; belongs to the NAD(P)-dependent epimerase/dehydratase family. UDP-glucuronic acid decarboxylase subfamily. As to quaternary structure, homohexamer, formed by a dimer of trimers.

The enzyme catalyses UDP-alpha-D-glucuronate + NAD(+) = UDP-beta-L-threo-pentopyranos-4-ulose + CO2 + NADH. The catalysed reaction is UDP-4-amino-4-deoxy-beta-L-arabinose + (6R)-10-formyltetrahydrofolate = UDP-4-deoxy-4-formamido-beta-L-arabinose + (6S)-5,6,7,8-tetrahydrofolate + H(+). It participates in nucleotide-sugar biosynthesis; UDP-4-deoxy-4-formamido-beta-L-arabinose biosynthesis; UDP-4-deoxy-4-formamido-beta-L-arabinose from UDP-alpha-D-glucuronate: step 1/3. It functions in the pathway nucleotide-sugar biosynthesis; UDP-4-deoxy-4-formamido-beta-L-arabinose biosynthesis; UDP-4-deoxy-4-formamido-beta-L-arabinose from UDP-alpha-D-glucuronate: step 3/3. The protein operates within bacterial outer membrane biogenesis; lipopolysaccharide biosynthesis. Its function is as follows. Bifunctional enzyme that catalyzes the oxidative decarboxylation of UDP-glucuronic acid (UDP-GlcUA) to UDP-4-keto-arabinose (UDP-Ara4O) and the addition of a formyl group to UDP-4-amino-4-deoxy-L-arabinose (UDP-L-Ara4N) to form UDP-L-4-formamido-arabinose (UDP-L-Ara4FN). The modified arabinose is attached to lipid A and is required for resistance to polymyxin and cationic antimicrobial peptides. This Escherichia coli O9:H4 (strain HS) protein is Bifunctional polymyxin resistance protein ArnA.